Reading from the N-terminus, the 23-residue chain is Keratin (23 aa).

Residues 1-23 form the IF rod domain; the sequence is YSSQLAQVQGLIGNVESQLAEIR. The segment at 1–23 is coil 2; the sequence is YSSQLAQVQGLIGNVESQLAEIR.

This sequence belongs to the intermediate filament family.

The sequence is that of Keratin from Cervus elaphus (Red deer).